Here is a 177-residue protein sequence, read N- to C-terminus: Large ribosomal subunit protein uL6 (177 aa).

Belongs to the universal ribosomal protein uL6 family. As to quaternary structure, part of the 50S ribosomal subunit.

Functionally, this protein binds to the 23S rRNA, and is important in its secondary structure. It is located near the subunit interface in the base of the L7/L12 stalk, and near the tRNA binding site of the peptidyltransferase center. The polypeptide is Large ribosomal subunit protein uL6 (Herminiimonas arsenicoxydans).